We begin with the raw amino-acid sequence, 429 residues long: 3-phosphoshikimate 1-carboxyvinyltransferase (429 aa).

The 3-phosphoshikimate site is built by Lys-21, Ser-22, and Arg-26. Lys-21 contacts phosphoenolpyruvate. Phosphoenolpyruvate-binding residues include Gly-94 and Arg-122. Positions 167, 169, 315, and 342 each coordinate 3-phosphoshikimate. Residue Gln-169 coordinates phosphoenolpyruvate. Asp-315 functions as the Proton acceptor in the catalytic mechanism. Residues Arg-346 and Arg-388 each coordinate phosphoenolpyruvate.

It belongs to the EPSP synthase family. As to quaternary structure, monomer.

The protein resides in the cytoplasm. The enzyme catalyses 3-phosphoshikimate + phosphoenolpyruvate = 5-O-(1-carboxyvinyl)-3-phosphoshikimate + phosphate. Its pathway is metabolic intermediate biosynthesis; chorismate biosynthesis; chorismate from D-erythrose 4-phosphate and phosphoenolpyruvate: step 6/7. Its function is as follows. Catalyzes the transfer of the enolpyruvyl moiety of phosphoenolpyruvate (PEP) to the 5-hydroxyl of shikimate-3-phosphate (S3P) to produce enolpyruvyl shikimate-3-phosphate and inorganic phosphate. The chain is 3-phosphoshikimate 1-carboxyvinyltransferase from Desulforudis audaxviator (strain MP104C).